A 285-amino-acid polypeptide reads, in one-letter code: Small ribosomal subunit biogenesis GTPase RsgA (285 aa).

Positions 61 to 215 (KNQLIRPKVA…IIDSPGFSSF (155 aa)) constitute a CP-type G domain. GTP-binding positions include 110–113 (TKID) and 159–167 (GQTGVGKTS). 4 residues coordinate Zn(2+): Cys239, Cys244, His246, and Cys254.

It belongs to the TRAFAC class YlqF/YawG GTPase family. RsgA subfamily. As to quaternary structure, monomer. Associates with 30S ribosomal subunit, binds 16S rRNA. Zn(2+) serves as cofactor.

Its subcellular location is the cytoplasm. Functionally, one of several proteins that assist in the late maturation steps of the functional core of the 30S ribosomal subunit. Helps release RbfA from mature subunits. May play a role in the assembly of ribosomal proteins into the subunit. Circularly permuted GTPase that catalyzes slow GTP hydrolysis, GTPase activity is stimulated by the 30S ribosomal subunit. The protein is Small ribosomal subunit biogenesis GTPase RsgA of Mesomycoplasma hyopneumoniae (strain J / ATCC 25934 / NCTC 10110) (Mycoplasma hyopneumoniae).